The primary structure comprises 134 residues: MLINTEAVNEYLSFFMFIFFSLGLCFFMLCLSWILGGRSSSRYKNTPFESGIVSSGNTNLYFSVKFYLIAMFFVVFDVEALYLYAWSVSIKESGWIGFSEALMFGISLLLGLFYLVRIRALNWSSSVKNNIQLF.

The next 3 helical transmembrane spans lie at phenylalanine 14 to isoleucine 34, phenylalanine 66 to tryptophan 86, and isoleucine 96 to valine 116.

The protein belongs to the complex I subunit 3 family. NDH-1 is composed of 13 different subunits. Subunits NuoA, H, J, K, L, M, N constitute the membrane sector of the complex.

It is found in the cell membrane. It catalyses the reaction a quinone + NADH + 5 H(+)(in) = a quinol + NAD(+) + 4 H(+)(out). Its function is as follows. NDH-1 shuttles electrons from NADH, via FMN and iron-sulfur (Fe-S) centers, to quinones in the respiratory chain. The immediate electron acceptor for the enzyme in this species is believed to be ubiquinone. Couples the redox reaction to proton translocation (for every two electrons transferred, four hydrogen ions are translocated across the cytoplasmic membrane), and thus conserves the redox energy in a proton gradient. This chain is NADH-quinone oxidoreductase subunit A, found in Buchnera aphidicola subsp. Acyrthosiphon pisum (strain APS) (Acyrthosiphon pisum symbiotic bacterium).